A 133-amino-acid chain; its full sequence is Acyl-CoA thioesterase YbgC (133 aa).

Asp-11 is an active-site residue.

Belongs to the 4-hydroxybenzoyl-CoA thioesterase family. As to quaternary structure, homotetramer. May interact with CagA.

Its function is as follows. Thioesterase that may be involved in phospholipid metabolism. Displays acyl-CoA thioesterase activity with lauroyl-CoA (C12:0), myristoyl-CoA (C14:0), palmitoyl-CoA (C16:0), stearoyl-CoA (C18:0) and benzoyl-CoA, catalyzing the hydrolysis of the thioester bond. Has low activity with butyryl-CoA and octanoyl-CoA. The polypeptide is Acyl-CoA thioesterase YbgC (ybgC) (Helicobacter pylori (strain ATCC 700392 / 26695) (Campylobacter pylori)).